The chain runs to 559 residues: NAD-dependent malic enzyme 2 (559 aa).

Tyr98 functions as the Proton donor in the catalytic mechanism. Arg151 serves as a coordination point for NAD(+). Residue Lys169 is the Proton acceptor of the active site. A divalent metal cation-binding residues include Glu240, Asp241, and Asp264. NAD(+) is bound by residues Asp264 and Asn413.

The protein belongs to the malic enzymes family. Homotetramer. Mg(2+) is required as a cofactor. It depends on Mn(2+) as a cofactor.

It catalyses the reaction (S)-malate + NAD(+) = pyruvate + CO2 + NADH. It carries out the reaction oxaloacetate + H(+) = pyruvate + CO2. In Vibrio vulnificus (strain YJ016), this protein is NAD-dependent malic enzyme 2.